We begin with the raw amino-acid sequence, 284 residues long: Diaminopimelate epimerase (284 aa).

Positions 20, 53, and 73 each coordinate substrate. The active-site Proton donor is the Cys82. Substrate-binding positions include 83 to 84 (GN), Asn167, Asn200, and 218 to 219 (ER). The Proton acceptor role is filled by Cys227. Residue 228 to 229 (GS) participates in substrate binding.

It belongs to the diaminopimelate epimerase family. In terms of assembly, homodimer.

The protein resides in the cytoplasm. It carries out the reaction (2S,6S)-2,6-diaminopimelate = meso-2,6-diaminopimelate. Its pathway is amino-acid biosynthesis; L-lysine biosynthesis via DAP pathway; DL-2,6-diaminopimelate from LL-2,6-diaminopimelate: step 1/1. Catalyzes the stereoinversion of LL-2,6-diaminopimelate (L,L-DAP) to meso-diaminopimelate (meso-DAP), a precursor of L-lysine and an essential component of the bacterial peptidoglycan. The chain is Diaminopimelate epimerase from Xylella fastidiosa (strain 9a5c).